The chain runs to 472 residues: Envelope glycoprotein O (472 aa).

The signal sequence occupies residues 1–31; sequence MGKKEMIMVKGIPKIMLLISITFLLLSLINC. N-linked (GlcNAc...) asparagine; by host glycans are attached at residues Asn109, Asn136, Asn163, Asn168, Asn177, Asn225, Asn248, Asn294, Asn298, Asn356, Asn391, Asn398, Asn405, Asn439, and Asn460.

This sequence belongs to the herpesviridae U47 family. In terms of assembly, forms the envelope trimer complex composed of gH, gL, and gO. The trimer interacts with host PDGFRA. N-glycosylated. Post-translationally, the N-terminus is blocked.

The protein localises to the virion membrane. Its function is as follows. Plays a role in viral entry into host cells. Forms a trimeric complex at the surface of the viral envelope together with gH and gL. This complex is required for entry in host fibroblasts. Mechanistically, engages host receptor(s) including PDGFRA to mediate infection. The polypeptide is Envelope glycoprotein O (UL74) (Human cytomegalovirus (strain Merlin) (HHV-5)).